A 487-amino-acid chain; its full sequence is Glucose starvation modulator protein 1 (487 aa).

Residues methionine 1–alanine 75 form a disordered region. The span at serine 59–leucine 68 shows a compositional bias: polar residues. Residues cysteine 83–cysteine 111 constitute a DNA-binding region (zn(2)-C6 fungal-type). Residues methionine 122 to glycine 139 are compositionally biased toward polar residues. The interval methionine 122–alanine 158 is disordered. A PAS domain is found at cysteine 348–glycine 420.

The protein belongs to the ERT1/acuK family.

It localises to the nucleus. Its function is as follows. Transcription factor which regulates nonfermentable carbon utilization. This Clavispora lusitaniae (strain ATCC 42720) (Yeast) protein is Glucose starvation modulator protein 1 (GSM1).